Reading from the N-terminus, the 199-residue chain is NAD(P)H dehydrogenase (quinone) (199 aa).

The Flavodoxin-like domain maps to Val4 to Ile190. Residues Ser10–Ile15 and Thr78–Phe80 each bind FMN. Position 12 (Tyr12) interacts with NAD(+). Trp98 serves as a coordination point for substrate. Residues Ser113–Gly119 and His134 contribute to the FMN site.

The protein belongs to the WrbA family. It depends on FMN as a cofactor.

The catalysed reaction is a quinone + NADH + H(+) = a quinol + NAD(+). The enzyme catalyses a quinone + NADPH + H(+) = a quinol + NADP(+). The protein is NAD(P)H dehydrogenase (quinone) of Rhodopseudomonas palustris (strain BisB5).